Reading from the N-terminus, the 407-residue chain is [Pyruvate dehydrogenase (acetyl-transferring)] kinase isozyme 2, mitochondrial (407 aa).

One can recognise a Histidine kinase domain in the interval 135–364 (LEYKDTYGDD…DAVIYLKALS (230 aa)). 2 positions are modified to phosphotyrosine: Tyr215 and Tyr216. ATP is bound by residues 251–258 (ELFKNAMR), Asp290, 309–310 (ST), and 325–330 (GFGYGL). N6-succinyllysine is present on Lys376.

The protein belongs to the PDK/BCKDK protein kinase family. In terms of assembly, homodimer, and heterodimer with PDK1. Interacts with the pyruvate dehydrogenase complex subunit DLAT, and is part of the multimeric pyruvate dehydrogenase complex that contains multiple copies of pyruvate dehydrogenase (E1), dihydrolipoamide acetyltransferase (DLAT, E2) and lipoamide dehydrogenase (DLD, E3). As to expression, expressed in many tissues, with the highest level in heart and skeletal muscle, intermediate levels in brain, kidney, pancreas and liver, and low levels in placenta and lung.

The protein localises to the mitochondrion matrix. The catalysed reaction is L-seryl-[pyruvate dehydrogenase E1 alpha subunit] + ATP = O-phospho-L-seryl-[pyruvate dehydrogenase E1 alpha subunit] + ADP + H(+). With respect to regulation, activity is enhanced by binding to the pyruvate dehydrogenase subunit DLAT. Inhibited by ADP and pyruvate; these compounds interfere with DLAT binding and thereby inhibit kinase activity. Inhibited by dichloroacetate. Inhibited by AZD7545; this compound interferes with DLAT binding and thereby inhibits kinase activity. Its function is as follows. Kinase that plays a key role in the regulation of glucose and fatty acid metabolism and homeostasis via phosphorylation of the pyruvate dehydrogenase subunits PDHA1 and PDHA2. This inhibits pyruvate dehydrogenase activity, and thereby regulates metabolite flux through the tricarboxylic acid cycle, down-regulates aerobic respiration and inhibits the formation of acetyl-coenzyme A from pyruvate. Inhibition of pyruvate dehydrogenase decreases glucose utilization and increases fat metabolism. Mediates cellular responses to insulin. Plays an important role in maintaining normal blood glucose levels and in metabolic adaptation to nutrient availability. Via its regulation of pyruvate dehydrogenase activity, plays an important role in maintaining normal blood pH and in preventing the accumulation of ketone bodies under starvation. Plays a role in the regulation of cell proliferation and in resistance to apoptosis under oxidative stress. Plays a role in p53/TP53-mediated apoptosis. This Homo sapiens (Human) protein is [Pyruvate dehydrogenase (acetyl-transferring)] kinase isozyme 2, mitochondrial (PDK2).